Reading from the N-terminus, the 350-residue chain is Streptomycin biosynthesis operon possible regulatory protein (350 aa).

A compositionally biased stretch (polar residues) spans 1–10 (MEHISGNSPE). Disordered stretches follow at residues 1-20 (MEHISGNSPEQVRERSAAVT), 168-189 (AGVPQSNVRIGRDGRARPLDPT), and 211-258 (AAQA…SRAD). Composition is skewed to basic and acidic residues over residues 177–189 (IGRDGRARPLDPT) and 223–242 (DVRKRLSRGESPLPERDRQQ).

The sequence is that of Streptomycin biosynthesis operon possible regulatory protein (strR) from Streptomyces griseus.